The following is an 87-amino-acid chain: Small ribosomal subunit protein uS17 (87 aa).

The protein belongs to the universal ribosomal protein uS17 family. In terms of assembly, part of the 30S ribosomal subunit.

One of the primary rRNA binding proteins, it binds specifically to the 5'-end of 16S ribosomal RNA. This Bacillus velezensis (strain DSM 23117 / BGSC 10A6 / LMG 26770 / FZB42) (Bacillus amyloliquefaciens subsp. plantarum) protein is Small ribosomal subunit protein uS17.